The following is a 116-amino-acid chain: Small ribosomal subunit protein bS16 (116 aa).

It belongs to the bacterial ribosomal protein bS16 family.

The polypeptide is Small ribosomal subunit protein bS16 (Chlamydia trachomatis serovar A (strain ATCC VR-571B / DSM 19440 / HAR-13)).